The chain runs to 366 residues: Histidinol-phosphate aminotransferase (366 aa).

At Lys222 the chain carries N6-(pyridoxal phosphate)lysine.

The protein belongs to the class-II pyridoxal-phosphate-dependent aminotransferase family. Histidinol-phosphate aminotransferase subfamily. Homodimer. The cofactor is pyridoxal 5'-phosphate.

The catalysed reaction is L-histidinol phosphate + 2-oxoglutarate = 3-(imidazol-4-yl)-2-oxopropyl phosphate + L-glutamate. The protein operates within amino-acid biosynthesis; L-histidine biosynthesis; L-histidine from 5-phospho-alpha-D-ribose 1-diphosphate: step 7/9. The chain is Histidinol-phosphate aminotransferase from Lysinibacillus sphaericus (strain C3-41).